Consider the following 436-residue polypeptide: Adenylyltransferase and sulfurtransferase UBA4 (436 aa).

ATP contacts are provided by residues Gly-74, Asp-95, 102–106 (SNLHR), Lys-119, and 163–164 (DT). 2 residues coordinate Zn(2+): Cys-205 and Cys-208. Residue Cys-222 is the Glycyl thioester intermediate; for adenylyltransferase activity of the active site. 2 residues coordinate Zn(2+): Cys-283 and Cys-286. The 100-residue stretch at 335–434 (NEKDHILIDV…YIDEEDHSYP (100 aa)) folds into the Rhodanese domain. Cys-393 acts as the Cysteine persulfide intermediate; for sulfurtransferase activity in catalysis.

This sequence in the N-terminal section; belongs to the HesA/MoeB/ThiF family. UBA4 subfamily. Zn(2+) serves as cofactor.

The protein localises to the cytoplasm. It is found in the cytosol. The protein operates within tRNA modification; 5-methoxycarbonylmethyl-2-thiouridine-tRNA biosynthesis. Plays a central role in 2-thiolation of mcm(5)S(2)U at tRNA wobble positions of cytosolic tRNA(Lys), tRNA(Glu) and tRNA(Gln). Acts by mediating the C-terminal thiocarboxylation of sulfur carrier URM1. Its N-terminus first activates URM1 as acyl-adenylate (-COAMP), then the persulfide sulfur on the catalytic cysteine is transferred to URM1 to form thiocarboxylation (-COSH) of its C-terminus. The reaction probably involves hydrogen sulfide that is generated from the persulfide intermediate and that acts as a nucleophile towards URM1. Subsequently, a transient disulfide bond is formed. Does not use thiosulfate as sulfur donor; NFS1 probably acting as a sulfur donor for thiocarboxylation reactions. Prior mcm(5) tRNA modification by the elongator complex is required for 2-thiolation. May also be involved in protein urmylation. The protein is Adenylyltransferase and sulfurtransferase UBA4 of Vanderwaltozyma polyspora (strain ATCC 22028 / DSM 70294 / BCRC 21397 / CBS 2163 / NBRC 10782 / NRRL Y-8283 / UCD 57-17) (Kluyveromyces polysporus).